The following is a 363-amino-acid chain: DNA replication and repair protein RecF (363 aa).

30–37 is an ATP binding site; that stretch reads GNNAQGKT.

It belongs to the RecF family.

It localises to the cytoplasm. The RecF protein is involved in DNA metabolism; it is required for DNA replication and normal SOS inducibility. RecF binds preferentially to single-stranded, linear DNA. It also seems to bind ATP. The sequence is that of DNA replication and repair protein RecF from Clostridium acetobutylicum (strain ATCC 824 / DSM 792 / JCM 1419 / IAM 19013 / LMG 5710 / NBRC 13948 / NRRL B-527 / VKM B-1787 / 2291 / W).